The primary structure comprises 788 residues: Protein translocase subunit SecA (788 aa).

Residues Q85, 103–107, and D494 contribute to the ATP site; that span reads GEGKT.

Belongs to the SecA family. As to quaternary structure, monomer and homodimer. Part of the essential Sec protein translocation apparatus which comprises SecA, SecYEG and auxiliary proteins SecDF. Other proteins may also be involved.

Its subcellular location is the cell membrane. It localises to the cytoplasm. The enzyme catalyses ATP + H2O + cellular proteinSide 1 = ADP + phosphate + cellular proteinSide 2.. In terms of biological role, part of the Sec protein translocase complex. Interacts with the SecYEG preprotein conducting channel. Has a central role in coupling the hydrolysis of ATP to the transfer of proteins into and across the cell membrane, serving as an ATP-driven molecular motor driving the stepwise translocation of polypeptide chains across the membrane. This chain is Protein translocase subunit SecA, found in Oenococcus oeni (strain ATCC BAA-331 / PSU-1).